The sequence spans 372 residues: Queuine tRNA-ribosyltransferase (372 aa).

The Proton acceptor role is filled by Asp-92. Residues 92–96 (DSGGY), Asp-146, Gln-188, and Gly-215 contribute to the substrate site. Residues 246-252 (GIGSLRE) are RNA binding. The active-site Nucleophile is Asp-265. The interval 270–274 (TRLGR) is RNA binding; important for wobble base 34 recognition. The Zn(2+) site is built by Cys-303, Cys-305, Cys-308, and His-334.

The protein belongs to the queuine tRNA-ribosyltransferase family. Homodimer. Within each dimer, one monomer is responsible for RNA recognition and catalysis, while the other monomer binds to the replacement base PreQ1. Zn(2+) is required as a cofactor.

The enzyme catalyses 7-aminomethyl-7-carbaguanine + guanosine(34) in tRNA = 7-aminomethyl-7-carbaguanosine(34) in tRNA + guanine. Its pathway is tRNA modification; tRNA-queuosine biosynthesis. Catalyzes the base-exchange of a guanine (G) residue with the queuine precursor 7-aminomethyl-7-deazaguanine (PreQ1) at position 34 (anticodon wobble position) in tRNAs with GU(N) anticodons (tRNA-Asp, -Asn, -His and -Tyr). Catalysis occurs through a double-displacement mechanism. The nucleophile active site attacks the C1' of nucleotide 34 to detach the guanine base from the RNA, forming a covalent enzyme-RNA intermediate. The proton acceptor active site deprotonates the incoming PreQ1, allowing a nucleophilic attack on the C1' of the ribose to form the product. After dissociation, two additional enzymatic reactions on the tRNA convert PreQ1 to queuine (Q), resulting in the hypermodified nucleoside queuosine (7-(((4,5-cis-dihydroxy-2-cyclopenten-1-yl)amino)methyl)-7-deazaguanosine). This is Queuine tRNA-ribosyltransferase from Prochlorococcus marinus (strain MIT 9312).